Here is a 130-residue protein sequence, read N- to C-terminus: Small ribosomal subunit protein uS8 (130 aa).

Lys-88 is modified (N6-succinyllysine).

This sequence belongs to the universal ribosomal protein uS8 family. In terms of assembly, component of the 40S ribosomal subunit. Part of the small subunit (SSU) processome, composed of more than 70 proteins and the RNA chaperone small nucleolar RNA (snoRNA) U3.

The protein resides in the cytoplasm. It localises to the nucleus. It is found in the nucleolus. Its function is as follows. Component of the small ribosomal subunit. Part of the small subunit (SSU) processome, first precursor of the small eukaryotic ribosomal subunit. During the assembly of the SSU processome in the nucleolus, many ribosome biogenesis factors, an RNA chaperone and ribosomal proteins associate with the nascent pre-rRNA and work in concert to generate RNA folding, modifications, rearrangements and cleavage as well as targeted degradation of pre-ribosomal RNA by the RNA exosome. Required for proper erythropoiesis. The chain is Small ribosomal subunit protein uS8 (RPS15A) from Pongo abelii (Sumatran orangutan).